Reading from the N-terminus, the 616-residue chain is Probable beta-hexosaminidase ARB_01353 (616 aa).

The first 20 residues, 1–20 (MRFAKALAITAVLLSGVVEA), serve as a signal peptide directing secretion. Residues 96–117 (KFDPFPDQSSKPKEKRQNAPPG) form a disordered region. Residue N333 is glycosylated (N-linked (GlcNAc...) asparagine). E361 serves as the catalytic Proton donor.

The protein belongs to the glycosyl hydrolase 20 family.

It localises to the secreted. The catalysed reaction is Hydrolysis of terminal non-reducing N-acetyl-D-hexosamine residues in N-acetyl-beta-D-hexosaminides.. Its function is as follows. Beta-hexosaminidase that shows a broad substrate specificity. The chain is Probable beta-hexosaminidase ARB_01353 from Arthroderma benhamiae (strain ATCC MYA-4681 / CBS 112371) (Trichophyton mentagrophytes).